Reading from the N-terminus, the 891-residue chain is Major core protein OPG136 precursor (891 aa).

Positions 615-697 (SPEGEETIIC…ILDRIITNAG (83 aa)) are excised as a propeptide.

This sequence belongs to the orthopxvirus protein OPG136 family. Interacts with P39/A4. Post-translationally, the precursor is cleaved by OPG083 to give rise to the 62 kDa mature protein during virion maturation. Proteolytic cleavage of major core proteins OPG136, OPG129, and OPG098, which occurs at a late stage of core formation, is required for production of infectious mature virions (MV).

It is found in the virion. In terms of biological role, core protein 4a is the most abundant virion protein. Major component of the virion core that undergoes proteolytic processing during the immature virion (IV) to mature virion (MV) transition. This chain is Major core protein OPG136 precursor (OPG136), found in Cynomys gunnisoni (Gunnison's prairie dog).